The primary structure comprises 181 residues: CASP-like protein 1F1 (181 aa).

Residues 1–18 lie on the Cytoplasmic side of the membrane; that stretch reads MPNNEAKFSVNQPLKTQK. Residues 19-39 traverse the membrane as a helical segment; the sequence is LFIGVQIFFRIVAIAASVASS. Over 40-70 the chain is Extracellular; sequence WLMITSKQVIDIGGIVLDARYSYSPEFKFLA. The helical transmembrane segment at 71–91 threads the bilayer; that stretch reads FTNIVVGCFSLLSLLFLVLVV. The Cytoplasmic segment spans residues 92–100; that stretch reads RQGSNPNHY. A helical transmembrane segment spans residues 101-121; it reads FFLFLHDLAMMSLVVGGCAAA. The Extracellular portion of the chain corresponds to 122-152; the sequence is TTVGFLGKHGNSHTGWMQICDNFGKFCNRAQ. Residues 153–173 traverse the membrane as a helical segment; sequence TSVTISYLNLICLSILTITSA. Topologically, residues 174-181 are cytoplasmic; it reads SKSRKMEA.

The protein belongs to the Casparian strip membrane proteins (CASP) family. As to quaternary structure, homodimer and heterodimers.

It localises to the cell membrane. The chain is CASP-like protein 1F1 from Populus trichocarpa (Western balsam poplar).